The following is a 159-amino-acid chain: MTLHPDLALPSPEDFEQLSPEALAARMNGPEGQGLPGTLGARLGIRYVSMARERVVATMPVEGNRQPAGRLHGGATLALAEELASVGSWLNLDPQRQVAVGVDLNGTHVRGVSEGHVTAEARLSYRGRSLMVWEIEMKDEKGRTTSLCRCTCNVISMGA.

This sequence belongs to the thioesterase PaaI family.

The sequence is that of Putative esterase DR_2406 from Deinococcus radiodurans (strain ATCC 13939 / DSM 20539 / JCM 16871 / CCUG 27074 / LMG 4051 / NBRC 15346 / NCIMB 9279 / VKM B-1422 / R1).